Here is a 365-residue protein sequence, read N- to C-terminus: Cytosolic 5'-nucleotidase 1A (365 aa).

A compositionally biased stretch (basic and acidic residues) spans M1–E11. The disordered stretch occupies residues M1–R23. The Nucleophile role is filled by D208.

The protein belongs to the 5'-nucleotidase type 3 family. Mg(2+) serves as cofactor.

It is found in the cytoplasm. It catalyses the reaction a ribonucleoside 5'-phosphate + H2O = a ribonucleoside + phosphate. The catalysed reaction is a 2'-deoxyribonucleoside 5'-phosphate + H2O = a 2'-deoxyribonucleoside + phosphate. It carries out the reaction IMP + H2O = inosine + phosphate. The enzyme catalyses AMP + H2O = adenosine + phosphate. It catalyses the reaction dCMP + H2O = 2'-deoxycytidine + phosphate. Activated by ADP. Catalyzes the hydrolysis of ribonucleotide and deoxyribonucleotide monophosphates, releasing inorganic phosphate and the corresponding nucleoside. AMP is the major substrate but can also hydrolyze dCMP and IMP. The chain is Cytosolic 5'-nucleotidase 1A (Nt5c1a) from Mus musculus (Mouse).